The primary structure comprises 413 residues: Serine hydroxymethyltransferase (413 aa).

Residues leucine 120 and glycine 124–leucine 126 contribute to the (6S)-5,6,7,8-tetrahydrofolate site. The residue at position 229 (lysine 229) is an N6-(pyridoxal phosphate)lysine. (6S)-5,6,7,8-tetrahydrofolate is bound at residue serine 352–phenylalanine 354.

This sequence belongs to the SHMT family. In terms of assembly, homodimer. It depends on pyridoxal 5'-phosphate as a cofactor.

The protein localises to the cytoplasm. It catalyses the reaction (6R)-5,10-methylene-5,6,7,8-tetrahydrofolate + glycine + H2O = (6S)-5,6,7,8-tetrahydrofolate + L-serine. Its pathway is one-carbon metabolism; tetrahydrofolate interconversion. The protein operates within amino-acid biosynthesis; glycine biosynthesis; glycine from L-serine: step 1/1. Catalyzes the reversible interconversion of serine and glycine with tetrahydrofolate (THF) serving as the one-carbon carrier. This reaction serves as the major source of one-carbon groups required for the biosynthesis of purines, thymidylate, methionine, and other important biomolecules. Also exhibits THF-independent aldolase activity toward beta-hydroxyamino acids, producing glycine and aldehydes, via a retro-aldol mechanism. The protein is Serine hydroxymethyltransferase of Heliobacterium modesticaldum (strain ATCC 51547 / Ice1).